A 682-amino-acid polypeptide reads, in one-letter code: TPR repeat-containing thioredoxin TTL4 (682 aa).

2 disordered regions span residues 1–120 (MSHY…GTPL) and 132–157 (NNNN…TGNI). Position 8 is a phosphoserine (Ser8). Residues 16–39 (KFRDSLSFQRDDDVINKPDFRELD) show a composition bias toward basic and acidic residues. Residue Ser42 is modified to Phosphoserine. A compositionally biased stretch (low complexity) spans 48-71 (GSSSAAATPAASGSSSSSSGSASG). TPR repeat units follow at residues 211–244 (SEEV…SPEN), 246–278 (AYRS…DPSY), 280–312 (RAHQ…PDQA), 402–435 (AYVL…DHSN), 449–482 (VAKA…DAFN), 483–516 (SVLY…QPSY), and 518–550 (KALL…LPGD). The Thioredoxin domain occupies 587–674 (DKFKTATSLP…MVCPSHQLLE (88 aa)).

In terms of tissue distribution, widely expressed.

Involved in osmotic and salt stress tolerance. May play a role in the control of meristematic cell size during osmotic stress. This Arabidopsis thaliana (Mouse-ear cress) protein is TPR repeat-containing thioredoxin TTL4 (TTL4).